Reading from the N-terminus, the 274-residue chain is Penicillin-insensitive murein endopeptidase (274 aa).

Positions 1 to 19 (MKNTVIALLALLASAGSLA) are cleaved as a signal peptide. Cystine bridges form between C44-C265, C187-C235, and C216-C223. Residues H110, H113, D120, D147, H150, and H211 each coordinate Zn(2+). Positions 224–263 (EDQAPPPPGDGCGAELQSWFEPPKPGSTPPVKKTPPPLPP) are disordered. Residues 245–263 (PPKPGSTPPVKKTPPPLPP) are compositionally biased toward pro residues.

Belongs to the peptidase M74 family. As to quaternary structure, dimer. Zn(2+) is required as a cofactor.

Its subcellular location is the periplasm. Its function is as follows. Murein endopeptidase that cleaves the D-alanyl-meso-2,6-diamino-pimelyl amide bond that connects peptidoglycan strands. Likely plays a role in the removal of murein from the sacculus. The chain is Penicillin-insensitive murein endopeptidase from Klebsiella pneumoniae (strain 342).